The sequence spans 456 residues: O-phospho-L-seryl-tRNA:Cys-tRNA synthase 2 (456 aa).

Residues 146–147 (AR), N251, and 274–276 (SGH) contribute to the pyridoxal 5'-phosphate site. K277 bears the N6-(pyridoxal phosphate)lysine mark.

Belongs to the SepCysS family. As to quaternary structure, homodimer. Interacts with SepRS. Requires pyridoxal 5'-phosphate as cofactor.

It carries out the reaction O-phospho-L-seryl-tRNA(Cys) + hydrogen sulfide + H(+) = L-cysteinyl-tRNA(Cys) + phosphate. In terms of biological role, converts O-phospho-L-seryl-tRNA(Cys) (Sep-tRNA(Cys)) to L-cysteinyl-tRNA(Cys) (Cys-tRNA(Cys)). In Methanospirillum hungatei JF-1 (strain ATCC 27890 / DSM 864 / NBRC 100397 / JF-1), this protein is O-phospho-L-seryl-tRNA:Cys-tRNA synthase 2.